The primary structure comprises 429 residues: MKERTIQPVNNGLNGNITIPGDKSISHRAVMFGSIAEGKTTIKGFLPGADCLSTISCFKEMGVEITQNGDEVTVVGKGLEGLQEPKAVLDVGNSGTTIRLMSGILANTPFFSCVQGDESIAKRPMKRVTNPLKQMGANIDGREEGTFTPLTIRGGDLKAIEYISPVASAQVKSAILLAGLRAEGVTAVTEPHISRDHTERMLEAFGVKVTREGKTVKLSGGQKLTATDIQVPGDVSSAAFFLVAGAIIPNSKLVLQNVGMNPTRTGIIDVLEKMGATFTVDLINEGASEPAANITIETSSLKGIEIGGDIIPRLIDEIPVIALAATQAEGITVIKDAHELKVKETNRIDTVVAELTKLGARIEATDDGMIIYGKSALKGNTVNSYGDHRIGMMLAIAGCLAEGKTIIEDAEAVGVSYPTFFDELQKLAK.

3 residues coordinate 3-phosphoshikimate: Lys23, Ser24, and Arg28. Lys23 serves as a coordination point for phosphoenolpyruvate. Gly95 and Arg123 together coordinate phosphoenolpyruvate. 3-phosphoshikimate is bound by residues Ser168, Gln170, Asp316, and Lys343. Gln170 provides a ligand contact to phosphoenolpyruvate. The active-site Proton acceptor is the Asp316. Phosphoenolpyruvate-binding residues include Arg347 and Arg389.

This sequence belongs to the EPSP synthase family. In terms of assembly, monomer.

It localises to the cytoplasm. The catalysed reaction is 3-phosphoshikimate + phosphoenolpyruvate = 5-O-(1-carboxyvinyl)-3-phosphoshikimate + phosphate. It functions in the pathway metabolic intermediate biosynthesis; chorismate biosynthesis; chorismate from D-erythrose 4-phosphate and phosphoenolpyruvate: step 6/7. Catalyzes the transfer of the enolpyruvyl moiety of phosphoenolpyruvate (PEP) to the 5-hydroxyl of shikimate-3-phosphate (S3P) to produce enolpyruvyl shikimate-3-phosphate and inorganic phosphate. This Bacillus cereus (strain B4264) protein is 3-phosphoshikimate 1-carboxyvinyltransferase.